The following is a 385-amino-acid chain: Heat-inducible transcription repressor HrcA (385 aa).

This sequence belongs to the HrcA family.

In terms of biological role, negative regulator of class I heat shock genes (grpE-dnaK-dnaJ and groELS operons). Prevents heat-shock induction of these operons. This chain is Heat-inducible transcription repressor HrcA, found in Protochlamydia amoebophila (strain UWE25).